The primary structure comprises 174 residues: ATP-dependent protease subunit HslV (174 aa).

Residue T2 is part of the active site. Positions 157, 160, and 163 each coordinate Na(+).

It belongs to the peptidase T1B family. HslV subfamily. A double ring-shaped homohexamer of HslV is capped on each side by a ring-shaped HslU homohexamer. The assembly of the HslU/HslV complex is dependent on binding of ATP.

The protein resides in the cytoplasm. It catalyses the reaction ATP-dependent cleavage of peptide bonds with broad specificity.. Allosterically activated by HslU binding. Functionally, protease subunit of a proteasome-like degradation complex believed to be a general protein degrading machinery. This is ATP-dependent protease subunit HslV from Shewanella denitrificans (strain OS217 / ATCC BAA-1090 / DSM 15013).